The chain runs to 572 residues: RNA polymerase sigma factor sigB (572 aa).

The transit peptide at 1 to 39 directs the protein to the chloroplast; that stretch reads MSSCLLPQFKCPPDSFSIHFRTSFCAPKHNKGSVFFQPQ. Residues 215 to 249 are disordered; sequence TRQTERKARRAKGLEKTASGIPSVKTGSSPKKKRL. Positions 360 to 373 match the Polymerase core binding motif; the sequence is DLVQEGCRGLVRGA. Residues 530-549 constitute a DNA-binding region (H-T-H motif); that stretch reads LQEIGEMMGVSRERVRQIES.

The protein belongs to the sigma-70 factor family. Highly expressed in cotyledons, to a lesser extent in leaves, sepals and siliques, and barely expressed in roots. Present in seedlings.

The protein resides in the plastid. It localises to the chloroplast. Functionally, required for the transition of plastids into chloroplasts by coordinating nuclear and chloroplastic genomes under light conditions. Sigma factors are initiation factors that promote the attachment of plastid-encoded RNA polymerase (PEP) to specific initiation sites and are then released. Promotes the biosynthesis of plastid-encoded tRNAs (e.g. trnE-UUC and trnV-UAC). In Arabidopsis thaliana (Mouse-ear cress), this protein is RNA polymerase sigma factor sigB (SIGB).